The primary structure comprises 165 residues: UPF0114 protein Ent638_3411 (165 aa).

Transmembrane regions (helical) follow at residues Leu-15 to Phe-35, Leu-53 to Val-73, and Leu-136 to Leu-156.

The protein belongs to the UPF0114 family.

It localises to the cell membrane. The polypeptide is UPF0114 protein Ent638_3411 (Enterobacter sp. (strain 638)).